The chain runs to 210 residues: MDNDKYLKGTTTVGVVCTDGIVLASEQRATMGHFIASKTAKKVYQIDDLVGMTTAGSVGDAQQLVRLVSVESQLYKMRRNESMTIKGIATLMSNFLNANRYYPMMVQLLIGGVDKNGPAIYSLDPMGGSIEETRISATGSGSPMAYGVLEDQYREDIAVKEGLDLAIRAIHNATKRDSASGENIDVVVITKEAFKRLDPEEVKSRRALLN.

A propeptide spans 1–9 (removed in mature form; by autocatalysis); it reads MDNDKYLKG. Residue threonine 10 is the Nucleophile of the active site.

Belongs to the peptidase T1B family. As to quaternary structure, the 20S proteasome core is composed of 14 alpha and 14 beta subunits that assemble into four stacked heptameric rings, resulting in a barrel-shaped structure. The two inner rings, each composed of seven catalytic beta subunits, are sandwiched by two outer rings, each composed of seven alpha subunits. The catalytic chamber with the active sites is on the inside of the barrel. Has a gated structure, the ends of the cylinder being occluded by the N-termini of the alpha-subunits. Is capped at one or both ends by the proteasome regulatory ATPase, PAN.

Its subcellular location is the cytoplasm. The catalysed reaction is Cleavage of peptide bonds with very broad specificity.. Its activity is regulated as follows. The formation of the proteasomal ATPase PAN-20S proteasome complex, via the docking of the C-termini of PAN into the intersubunit pockets in the alpha-rings, triggers opening of the gate for substrate entry. Interconversion between the open-gate and close-gate conformations leads to a dynamic regulation of the 20S proteasome proteolysis activity. Functionally, component of the proteasome core, a large protease complex with broad specificity involved in protein degradation. The polypeptide is Proteasome subunit beta (Methanosarcina mazei (strain ATCC BAA-159 / DSM 3647 / Goe1 / Go1 / JCM 11833 / OCM 88) (Methanosarcina frisia)).